The chain runs to 206 residues: Large ribosomal subunit protein uL4 (206 aa).

The tract at residues 47–75 (GTQSAKTRAEVSGGGIKPWRQKGTGRARQ) is disordered.

Belongs to the universal ribosomal protein uL4 family. Part of the 50S ribosomal subunit.

In terms of biological role, one of the primary rRNA binding proteins, this protein initially binds near the 5'-end of the 23S rRNA. It is important during the early stages of 50S assembly. It makes multiple contacts with different domains of the 23S rRNA in the assembled 50S subunit and ribosome. Functionally, forms part of the polypeptide exit tunnel. This Clostridium botulinum (strain ATCC 19397 / Type A) protein is Large ribosomal subunit protein uL4.